We begin with the raw amino-acid sequence, 521 residues long: 4-cresol dehydrogenase [hydroxylating] flavoprotein subunit (521 aa).

The region spanning 54–268 (AAHAPSAAVT…VEIVDALRPL (215 aa)) is the FAD-binding PCMH-type domain. Position 384 is an O-8alpha-FAD tyrosine (tyrosine 384).

In terms of assembly, tetramer of two cytochrome subunits and two flavoprotein subunits. FAD serves as cofactor.

It catalyses the reaction 4-methylphenol + 4 oxidized [azurin] + H2O = 4 reduced [azurin] + 4-hydroxybenzaldehyde + 4 H(+). The protein operates within aromatic compound metabolism; p-cresol degradation. Its function is as follows. Catalyzes the azurin dependent hydroxylation of the methyl group of 4-methylphenol to form 4-hydroxybenzaldehyde. This is 4-cresol dehydrogenase [hydroxylating] flavoprotein subunit (pchF) from Pseudomonas putida (Arthrobacter siderocapsulatus).